The primary structure comprises 338 residues: MTRF1L release factor glutamine methyltransferase (338 aa).

S-adenosyl-L-methionine contacts are provided by residues glycine 167–glycine 171, aspartate 190, tryptophan 225, and asparagine 239. Asparagine 239–tyrosine 242 serves as a coordination point for substrate.

The protein belongs to the protein N5-glutamine methyltransferase family.

The protein resides in the mitochondrion. It catalyses the reaction L-glutaminyl-[peptide chain release factor] + S-adenosyl-L-methionine = N(5)-methyl-L-glutaminyl-[peptide chain release factor] + S-adenosyl-L-homocysteine + H(+). In terms of biological role, N5-glutamine methyltransferase responsible for the methylation of the glutamine residue in the universally conserved GGQ motif of the mitochondrial translation release factors MTRF1, MTRF1L, MRPL58/ICT1 and MTRFR. The protein is MTRF1L release factor glutamine methyltransferase (HEMK1) of Homo sapiens (Human).